The chain runs to 61 residues: Large ribosomal subunit protein uL30 (61 aa).

The protein belongs to the universal ribosomal protein uL30 family. As to quaternary structure, part of the 50S ribosomal subunit.

In Rhizorhabdus wittichii (strain DSM 6014 / CCUG 31198 / JCM 15750 / NBRC 105917 / EY 4224 / RW1) (Sphingomonas wittichii), this protein is Large ribosomal subunit protein uL30.